Here is a 1269-residue protein sequence, read N- to C-terminus: DNA-directed RNA polymerase subunit beta (1269 aa).

Belongs to the RNA polymerase beta chain family. As to quaternary structure, the RNAP catalytic core consists of 2 alpha, 1 beta, 1 beta' and 1 omega subunit. When a sigma factor is associated with the core the holoenzyme is formed, which can initiate transcription.

The catalysed reaction is RNA(n) + a ribonucleoside 5'-triphosphate = RNA(n+1) + diphosphate. Its function is as follows. DNA-dependent RNA polymerase catalyzes the transcription of DNA into RNA using the four ribonucleoside triphosphates as substrates. This is DNA-directed RNA polymerase subunit beta from Porphyromonas gingivalis (strain ATCC BAA-308 / W83).